We begin with the raw amino-acid sequence, 98 residues long: Alpha-defensin 1 (98 aa).

The first 19 residues, 1–19 (MRTLTLLTALLLLALQVQT), serve as a signal peptide directing secretion. Positions 20-63 (QSLEETADQVPAQDQPGAEAQDITISFAGDERSAREASKSLIGT) are excised as a propeptide. Intrachain disulfides connect C66-C96, C68-C84, and C74-C95.

The protein belongs to the alpha-defensin family. Paneth cells of the small bowel.

Its subcellular location is the secreted. In terms of biological role, has broad-spectrum antimicrobial properties. The antimicrobial activity decreases in the present of salt in vitro. Binds anionic phospholipids, which leads to the aggregation of liposomes in vitro. Membrane permeabilization of the target cells is an essential part of the peptide's mode of antimicrobial activity. No hemolytic activity against sheep or horse erythrocytes. Has antibacterial activity against the bacterial horse pathogens Gram-positive R.equi ATCC 33701 P(-) (minimum bactericidal concentration or MBC=5 ug/ml) and R.equi ATCC 33701 P(+) (MBC=5 ug/ml), which are resistant against beta-lactam antibiotics. Also has antibacterial activity against highly infectious wild-type strain R.equi 85F P(+) (MBC=5 ug/ml), S.equi subsp. equi (MBC=5 ug/ml), S.equi subsp. zooepidemicus (MBC=5 ug/ml), S.dysgalactiae subsp. equisimilis (MBC=10 ug/ml), S.choleraesuis subsp. choleraesuis serovar Typhimurium (MBC=10 ug/ml), and P.multocida subsp. multocida (MBC=&gt;10 ug/ml). Probably contributes to the antimicrobial barrier function of the small bowel mucosa. The sequence is that of Alpha-defensin 1 from Equus caballus (Horse).